Consider the following 158-residue polypeptide: ATP synthase subunit b', chloroplastic (158 aa).

Residues 25–45 (ATLPLMALQFIILTTILNFIF) form a helical membrane-spanning segment.

Belongs to the ATPase B chain family. In terms of assembly, F-type ATPases have 2 components, F(1) - the catalytic core - and F(0) - the membrane proton channel. F(1) has five subunits: alpha(3), beta(3), gamma(1), delta(1), epsilon(1). F(0) has four main subunits: a(1), b(1), b'(1) and c(10-14). The alpha and beta chains form an alternating ring which encloses part of the gamma chain. F(1) is attached to F(0) by a central stalk formed by the gamma and epsilon chains, while a peripheral stalk is formed by the delta, b and b' chains.

Its subcellular location is the plastid. The protein localises to the chloroplast thylakoid membrane. In terms of biological role, f(1)F(0) ATP synthase produces ATP from ADP in the presence of a proton or sodium gradient. F-type ATPases consist of two structural domains, F(1) containing the extramembraneous catalytic core and F(0) containing the membrane proton channel, linked together by a central stalk and a peripheral stalk. During catalysis, ATP synthesis in the catalytic domain of F(1) is coupled via a rotary mechanism of the central stalk subunits to proton translocation. Component of the F(0) channel, it forms part of the peripheral stalk, linking F(1) to F(0). The b'-subunit is a diverged and duplicated form of b found in plants and photosynthetic bacteria. The chain is ATP synthase subunit b', chloroplastic from Gracilaria tenuistipitata var. liui (Red alga).